Reading from the N-terminus, the 203-residue chain is MSKRKASKYKIDRRLGENIWGRPKSSVNRRSYGPGQHGQRRKSKVSDFGIQLRAKQKLKGYYGDVTEKQFKRTYQEASKMKGDTGQNLIGLLEQRLDMVVYRAKFAPTIFSARQVVSHGHIYVNGVKCNIASRRVRPGDVVSLGKKAKEMALIAEAQALPEREVPDYVAADGDKVTFTRVPTLDEVPYPVKMEPNLVVEFYSR.

The disordered stretch occupies residues 15–46 (LGENIWGRPKSSVNRRSYGPGQHGQRRKSKVS). One can recognise an S4 RNA-binding domain in the interval 94 to 154 (QRLDMVVYRA…KKAKEMALIA (61 aa)).

Belongs to the universal ribosomal protein uS4 family. In terms of assembly, part of the 30S ribosomal subunit. Contacts protein S5. The interaction surface between S4 and S5 is involved in control of translational fidelity.

Its function is as follows. One of the primary rRNA binding proteins, it binds directly to 16S rRNA where it nucleates assembly of the body of the 30S subunit. With S5 and S12 plays an important role in translational accuracy. This is Small ribosomal subunit protein uS4 from Novosphingobium aromaticivorans (strain ATCC 700278 / DSM 12444 / CCUG 56034 / CIP 105152 / NBRC 16084 / F199).